We begin with the raw amino-acid sequence, 304 residues long: Acetylglutamate kinase (304 aa).

Residues Gly-77–Gly-78, Arg-99, and Asn-201 contribute to the substrate site.

Belongs to the acetylglutamate kinase family. ArgB subfamily.

The protein localises to the cytoplasm. It catalyses the reaction N-acetyl-L-glutamate + ATP = N-acetyl-L-glutamyl 5-phosphate + ADP. It functions in the pathway amino-acid biosynthesis; L-arginine biosynthesis; N(2)-acetyl-L-ornithine from L-glutamate: step 2/4. Its function is as follows. Catalyzes the ATP-dependent phosphorylation of N-acetyl-L-glutamate. The sequence is that of Acetylglutamate kinase from Methylibium petroleiphilum (strain ATCC BAA-1232 / LMG 22953 / PM1).